We begin with the raw amino-acid sequence, 66 residues long: Large ribosomal subunit protein uL29 (66 aa).

This sequence belongs to the universal ribosomal protein uL29 family.

This chain is Large ribosomal subunit protein uL29, found in Francisella tularensis subsp. holarctica (strain LVS).